Consider the following 415-residue polypeptide: Multidrug resistance protein MdtA (415 aa).

A signal peptide spans 1–21; it reads MKGSYKSRWVIVIVVVIAAIA. The segment covering 31–47 has biased composition (polar residues); it reads DSQSAAPGATKQAQQSP. Disordered stretches follow at residues 31 to 60 and 392 to 415; these read DSQS…GPLA and EAQS…GARS. The segment covering 399-415 has biased composition (basic and acidic residues); sequence PEEKATSREYAKKGARS.

It belongs to the membrane fusion protein (MFP) (TC 8.A.1) family. Part of a tripartite efflux system composed of MdtA, MdtB and MdtC.

Its subcellular location is the cell inner membrane. Functionally, the MdtABC tripartite complex confers resistance against novobiocin and deoxycholate. This Escherichia coli O157:H7 protein is Multidrug resistance protein MdtA.